We begin with the raw amino-acid sequence, 451 residues long: Uronate isomerase (451 aa).

It belongs to the metallo-dependent hydrolases superfamily. Uronate isomerase family.

It carries out the reaction D-glucuronate = D-fructuronate. The enzyme catalyses aldehydo-D-galacturonate = keto-D-tagaturonate. Its pathway is carbohydrate metabolism; pentose and glucuronate interconversion. This is Uronate isomerase from Thermotoga sp. (strain RQ2).